We begin with the raw amino-acid sequence, 90 residues long: DNA-directed RNA polymerase subunit omega (90 aa).

It belongs to the RNA polymerase subunit omega family. As to quaternary structure, the RNAP catalytic core consists of 2 alpha, 1 beta, 1 beta' and 1 omega subunit. When a sigma factor is associated with the core the holoenzyme is formed, which can initiate transcription.

It catalyses the reaction RNA(n) + a ribonucleoside 5'-triphosphate = RNA(n+1) + diphosphate. Functionally, promotes RNA polymerase assembly. Latches the N- and C-terminal regions of the beta' subunit thereby facilitating its interaction with the beta and alpha subunits. This chain is DNA-directed RNA polymerase subunit omega, found in Hamiltonella defensa subsp. Acyrthosiphon pisum (strain 5AT).